A 506-amino-acid chain; its full sequence is Ribose import ATP-binding protein RbsA 2 (506 aa).

ABC transporter domains follow at residues 7–242 (LEMR…VGRP) and 250–497 (ERDI…TGVN). 39 to 46 (GENGAGKS) contacts ATP.

Belongs to the ABC transporter superfamily. Ribose importer (TC 3.A.1.2.1) family. The complex is composed of an ATP-binding protein (RbsA), two transmembrane proteins (RbsC) and a solute-binding protein (RbsB).

Its subcellular location is the cell inner membrane. It catalyses the reaction D-ribose(out) + ATP + H2O = D-ribose(in) + ADP + phosphate + H(+). Functionally, part of the ABC transporter complex RbsABC involved in ribose import. Responsible for energy coupling to the transport system. In Escherichia coli O157:H7, this protein is Ribose import ATP-binding protein RbsA 2.